A 380-amino-acid chain; its full sequence is Protein arginine N-methyltransferase PRMT10 (380 aa).

Positions 26–357 (EVDFANYFCT…KENHRLMDME (332 aa)) constitute an SAM-dependent MTase PRMT-type domain. S-adenosyl-L-methionine-binding residues include Q42, R51, G75, E97, and E126. Active-site residues include E140 and E149. Residues 187–227 (ENKMEDLEIAMHDWNLFVEDTESYYGVNMNVLTKAYRAEHE) form a dimerization arm region.

This sequence belongs to the class I-like SAM-binding methyltransferase superfamily. Protein arginine N-methyltransferase family. As to quaternary structure, ring-like homodimer.

The enzyme catalyses L-arginyl-[protein] + 2 S-adenosyl-L-methionine = N(omega),N(omega)-dimethyl-L-arginyl-[protein] + 2 S-adenosyl-L-homocysteine + 2 H(+). Methylates (mono and asymmetric dimethylation) the guanidino nitrogens of arginyl residues in some proteins. The polypeptide is Protein arginine N-methyltransferase PRMT10 (PRMT10) (Oryza sativa subsp. japonica (Rice)).